The sequence spans 123 residues: Holo-[acyl-carrier-protein] synthase (123 aa).

Mg(2+)-binding residues include aspartate 8 and glutamate 55.

Belongs to the P-Pant transferase superfamily. AcpS family. It depends on Mg(2+) as a cofactor.

It is found in the cytoplasm. It catalyses the reaction apo-[ACP] + CoA = holo-[ACP] + adenosine 3',5'-bisphosphate + H(+). Its function is as follows. Transfers the 4'-phosphopantetheine moiety from coenzyme A to a Ser of acyl-carrier-protein. The chain is Holo-[acyl-carrier-protein] synthase from Solidesulfovibrio magneticus (strain ATCC 700980 / DSM 13731 / RS-1) (Desulfovibrio magneticus).